The primary structure comprises 512 residues: Mesoderm induction early response protein 1 (512 aa).

A compositionally biased stretch (low complexity) spans 1–16 (MAEPSVESSSPGGSAT). 2 disordered regions span residues 1 to 63 (MAEP…REGD) and 75 to 173 (YGST…EDYI). Ser10 carries the phosphoserine modification. Positions 17-36 (SDDHEFDPSADMLVHDFDDE) are enriched in basic and acidic residues. Acidic residues-rich tracts occupy residues 37–46 (RTLEEEEMME) and 83–105 (EEDEEEEEEEEEGEDDEDADNDD). Residues 129–144 (QSSNDDPSQSVASQDA) show a composition bias toward polar residues. Residue Ser141 is modified to Phosphoserine. The residue at position 155 (Tyr155) is a Phosphotyrosine. Phosphoserine occurs at positions 160 and 166. Acidic residues predominate over residues 160–173 (SEVEEESEEDEDYI). Positions 180–278 (KEIMVGSMFQ…EALRRLRFNV (99 aa)) constitute an ELM2 domain. The interaction with HDAC1 stretch occupies residues 180–284 (KEIMVGSMFQ…RFNVKAAREE (105 aa)). Lys239 participates in a covalent cross-link: Glycyl lysine isopeptide (Lys-Gly) (interchain with G-Cter in SUMO2). Residues 283–335 (EELSVWTEEECRNFEQGLKAYGKDFHLIQANKVRTRSVGECVAFYYMWKKSER) form the SANT domain. Positions 366-512 (ESESAASSRA…KFEELENTDD (147 aa)) are disordered. Ser367, Ser369, and Ser377 each carry phosphoserine. Polar residues predominate over residues 396 to 409 (TVSTTNQNGVSSNG). Positions 414 to 423 (LNKEEVKVEG) are enriched in basic and acidic residues. A Glycyl lysine isopeptide (Lys-Gly) (interchain with G-Cter in SUMO2) cross-link involves residue Lys420. Phosphothreonine is present on Thr448. The segment covering 462-475 (ARNENDFDEKSERP) has biased composition (basic and acidic residues). Positions 482-494 (NSNGKESPGSSEF) are enriched in polar residues. Ser483, Ser488, and Ser491 each carry phosphoserine.

Interacts with HDAC1. Part of a complex containing at least CDYL, MIER1, MIER2, HDAC1 and HDAC2.

It is found in the nucleus. Transcriptional repressor regulating the expression of a number of genes including SP1 target genes. Probably functions through recruitment of HDAC1 a histone deacetylase involved in chromatin silencing. This chain is Mesoderm induction early response protein 1 (MIER1), found in Pongo abelii (Sumatran orangutan).